Consider the following 337-residue polypeptide: 1-aminocyclopropane-1-carboxylate deaminase (337 aa).

Residue lysine 50 is modified to N6-(pyridoxal phosphate)lysine. Serine 77 serves as the catalytic Nucleophile.

This sequence belongs to the ACC deaminase/D-cysteine desulfhydrase family. In terms of assembly, homotrimer. Pyridoxal 5'-phosphate is required as a cofactor.

The enzyme catalyses 1-aminocyclopropane-1-carboxylate + H2O = 2-oxobutanoate + NH4(+). Its function is as follows. Catalyzes a cyclopropane ring-opening reaction, the irreversible conversion of 1-aminocyclopropane-1-carboxylate (ACC) to ammonia and alpha-ketobutyrate. Allows growth on ACC as a nitrogen source. The sequence is that of 1-aminocyclopropane-1-carboxylate deaminase from Methylobacterium sp. (strain 4-46).